The primary structure comprises 193 residues: Xanthine phosphoribosyltransferase (193 aa).

The xanthine site is built by L20 and T27. 128-132 (ANGQA) lines the 5-phospho-alpha-D-ribose 1-diphosphate pocket. K156 contacts xanthine.

The protein belongs to the purine/pyrimidine phosphoribosyltransferase family. Xpt subfamily. Homodimer.

The protein resides in the cytoplasm. It carries out the reaction XMP + diphosphate = xanthine + 5-phospho-alpha-D-ribose 1-diphosphate. Its pathway is purine metabolism; XMP biosynthesis via salvage pathway; XMP from xanthine: step 1/1. Functionally, converts the preformed base xanthine, a product of nucleic acid breakdown, to xanthosine 5'-monophosphate (XMP), so it can be reused for RNA or DNA synthesis. This chain is Xanthine phosphoribosyltransferase, found in Streptococcus gordonii (strain Challis / ATCC 35105 / BCRC 15272 / CH1 / DL1 / V288).